Reading from the N-terminus, the 475-residue chain is Sulfate adenylyltransferase subunit 1 (475 aa).

The tr-type G domain occupies 25-239 (KSLLRFLTCG…EVLETVEIQR (215 aa)). Residues 34–41 (GSVDDGKS) are G1. GTP is bound at residue 34–41 (GSVDDGKS). Residues 92–96 (GITID) are G2. Residues 113 to 116 (DTPG) form a G3 region. GTP contacts are provided by residues 113–117 (DTPGH) and 168–171 (NKMD). The G4 stretch occupies residues 168-171 (NKMD). Residues 206–208 (SAL) are G5.

It belongs to the TRAFAC class translation factor GTPase superfamily. Classic translation factor GTPase family. CysN/NodQ subfamily. As to quaternary structure, heterodimer composed of CysD, the smaller subunit, and CysN.

It carries out the reaction sulfate + ATP + H(+) = adenosine 5'-phosphosulfate + diphosphate. Its pathway is sulfur metabolism; hydrogen sulfide biosynthesis; sulfite from sulfate: step 1/3. With CysD forms the ATP sulfurylase (ATPS) that catalyzes the adenylation of sulfate producing adenosine 5'-phosphosulfate (APS) and diphosphate, the first enzymatic step in sulfur assimilation pathway. APS synthesis involves the formation of a high-energy phosphoric-sulfuric acid anhydride bond driven by GTP hydrolysis by CysN coupled to ATP hydrolysis by CysD. The polypeptide is Sulfate adenylyltransferase subunit 1 (Escherichia coli (strain UTI89 / UPEC)).